Here is a 410-residue protein sequence, read N- to C-terminus: Histidine--tRNA ligase (410 aa).

Belongs to the class-II aminoacyl-tRNA synthetase family. Homodimer.

It localises to the cytoplasm. The enzyme catalyses tRNA(His) + L-histidine + ATP = L-histidyl-tRNA(His) + AMP + diphosphate + H(+). This is Histidine--tRNA ligase from Campylobacter hominis (strain ATCC BAA-381 / DSM 21671 / CCUG 45161 / LMG 19568 / NCTC 13146 / CH001A).